The primary structure comprises 366 residues: 3-dehydroquinate synthase (366 aa).

Residues 74–79, 108–112, 132–133, lysine 144, lysine 153, and 171–174 contribute to the NAD(+) site; these read SGEAAK, GVVGD, TT, and FLRT. Zn(2+)-binding residues include glutamate 186, histidine 249, and histidine 266.

The protein belongs to the sugar phosphate cyclases superfamily. Dehydroquinate synthase family. Requires Co(2+) as cofactor. It depends on Zn(2+) as a cofactor. NAD(+) serves as cofactor.

It is found in the cytoplasm. The enzyme catalyses 7-phospho-2-dehydro-3-deoxy-D-arabino-heptonate = 3-dehydroquinate + phosphate. It functions in the pathway metabolic intermediate biosynthesis; chorismate biosynthesis; chorismate from D-erythrose 4-phosphate and phosphoenolpyruvate: step 2/7. Catalyzes the conversion of 3-deoxy-D-arabino-heptulosonate 7-phosphate (DAHP) to dehydroquinate (DHQ). This Geobacillus thermodenitrificans (strain NG80-2) protein is 3-dehydroquinate synthase.